The primary structure comprises 124 residues: Small ribosomal subunit protein uS12 (124 aa).

Residue D89 is modified to 3-methylthioaspartic acid. The disordered stretch occupies residues 105–124 (QGVKNRGQARSRYGAKKEKK). Positions 111-124 (GQARSRYGAKKEKK) are enriched in basic residues.

It belongs to the universal ribosomal protein uS12 family. As to quaternary structure, part of the 30S ribosomal subunit. Contacts proteins S8 and S17. May interact with IF1 in the 30S initiation complex.

With S4 and S5 plays an important role in translational accuracy. In terms of biological role, interacts with and stabilizes bases of the 16S rRNA that are involved in tRNA selection in the A site and with the mRNA backbone. Located at the interface of the 30S and 50S subunits, it traverses the body of the 30S subunit contacting proteins on the other side and probably holding the rRNA structure together. The combined cluster of proteins S8, S12 and S17 appears to hold together the shoulder and platform of the 30S subunit. The chain is Small ribosomal subunit protein uS12 from Micrococcus luteus (Micrococcus lysodeikticus).